Here is a 128-residue protein sequence, read N- to C-terminus: Infection structure-specific protein 56 (128 aa).

Polar residues-rich tracts occupy residues 27 to 36 and 87 to 101; these read HATYPQSQPH and TSIS…DSQS. Disordered stretches follow at residues 27 to 48 and 86 to 128; these read HATY…AVPS and GTSI…STSA. Positions 115–128 are enriched in basic and acidic residues; the sequence is KDAKKELKDPSTSA.

General role in the development of germlings including formation of the infection structures. This chain is Infection structure-specific protein 56 (INF56), found in Uromyces appendiculatus (Rust fungus).